We begin with the raw amino-acid sequence, 177 residues long: MSRVAKAPVVIPAGVEVKLNGQVISIKGKNGELTRTINDAVEIKHADNALTFGPRDGFVDGWAQAGTARALLNSMVIGVTEGFTKKLQLVGVGYRAAVKGNVVNLALGFSHPVDHELPAGITAECPSQTEIVLKGADKQLIGQVAADLRAYRRPEPYKGKGVRYADEVVRTKEAKKK.

This sequence belongs to the universal ribosomal protein uL6 family. Part of the 50S ribosomal subunit.

In terms of biological role, this protein binds to the 23S rRNA, and is important in its secondary structure. It is located near the subunit interface in the base of the L7/L12 stalk, and near the tRNA binding site of the peptidyltransferase center. This Edwardsiella ictaluri (strain 93-146) protein is Large ribosomal subunit protein uL6.